Here is a 105-residue protein sequence, read N- to C-terminus: Vitelline membrane protein Vm32E (105 aa).

A signal peptide spans 1–17 (MHFIALIVAVCVAFAGA). Positions 25–62 (GIAAPPCPKNYLFSCQPNLVPAPCAQEAASYGSAGAYA) constitute a VM domain.

Belongs to the vitelline membrane family.

It is found in the secreted. Major early eggshell protein. The chain is Vitelline membrane protein Vm32E from Drosophila ananassae (Fruit fly).